The chain runs to 150 residues: Globin-1 (150 aa).

The 140-residue stretch at 11–150 (ALTAAEKATI…MICILLRSSY (140 aa)) folds into the Globin domain. Heme b is bound by residues His-74 and His-106.

The protein belongs to the globin family. As to quaternary structure, monomer.

This chain is Globin-1, found in Petromyzon marinus (Sea lamprey).